We begin with the raw amino-acid sequence, 316 residues long: Bifunctional peptidase and (3S)-lysyl hydroxylase JMJD7 (316 aa).

Position 19 is a cysteine sulfenic acid (-SOH) (Cys19). 2-oxoglutarate is bound by residues Tyr123 and Thr172. Tyr123 serves as a coordination point for succinate. The region spanning 124-310 (IQKQNSNLSV…YCYYRMLEQM (187 aa)) is the JmjC domain. Fe cation is bound by residues His175 and Asp177. 3 residues coordinate 2-oxoglutarate: Asn181, Tyr183, and Lys190. 2 residues coordinate succinate: Tyr183 and Lys190. His278 lines the Fe cation pocket. Trp292 contacts 2-oxoglutarate.

Homodimer; disulfide-linked. It depends on Fe(2+) as a cofactor. Expressed in the pars intercerebralis and fan-shaped body, regions known to be involved in sleep.

It localises to the nucleus. The protein localises to the cytoplasm. It catalyses the reaction L-lysyl-[protein] + 2-oxoglutarate + O2 = (3S)-3-hydroxy-L-lysyl-[protein] + succinate + CO2. In terms of biological role, bifunctional enzyme that acts both as an endopeptidase and 2-oxoglutarate-dependent monooxygenase. Endopeptidase that cleaves histones N-terminal tails at the carboxyl side of methylated arginine or lysine residues, to generate 'tailless nucleosomes', which may trigger transcription elongation. Hydroxylates the guanylate binding protein 128up. May be involved in regulation of behavior and circadian rhythms. The polypeptide is Bifunctional peptidase and (3S)-lysyl hydroxylase JMJD7 (Drosophila melanogaster (Fruit fly)).